The following is a 547-amino-acid chain: Sodium-coupled neutral amino acid transporter 4 (547 aa).

Residues 1-26 are disordered; it reads MDPMELRNVNIEPDDESSSGESVPDS. At 1-104 the chain is on the extracellular side; it reads MDPMELRNVN…GLSYAMANTG (104 aa). Position 49 is a phosphoserine (serine 49). A helical transmembrane segment spans residues 105–125; the sequence is IILFIIMLLAVAILSLYSVHL. The Cytoplasmic segment spans residues 126–151; the sequence is LLKTAKEGGSLIYEKLGEKAFGWPGK. Residues 152–172 form a helical membrane-spanning segment; that stretch reads IGAFISITMQNIGAMSSYLFI. Residues 173–195 are Extracellular-facing; that stretch reads IKYELPEVIRAFMGLEENTGEWY. A helical membrane pass occupies residues 196 to 216; the sequence is PNGNYLIVFVSLGIILPLSLL. The Cytoplasmic portion of the chain corresponds to 217-220; it reads KNLG. The helical transmembrane segment at 221–241 threads the bilayer; that stretch reads YLGYTSGFSLTCMVFFVSVVI. Topologically, residues 242–332 are extracellular; that stretch reads YKKFQIPCPL…PKYFVFNSRT (91 aa). A disulfide bond links cysteine 249 and cysteine 321. Residues asparagine 260, asparagine 264, and asparagine 276 are each glycosylated (N-linked (GlcNAc...) asparagine). Residues 333 to 353 form a helical membrane-spanning segment; the sequence is AYAIPILAFAFVCHPEVLPIY. Residues 354–369 lie on the Cytoplasmic side of the membrane; that stretch reads SELKDRSRRKMQTVSN. A helical transmembrane segment spans residues 370-390; the sequence is ISITGMLVMYLLAALFGYLTF. Over 391–411 the chain is Extracellular; it reads YGEVEDELLHAYSKVYTFDIP. A helical transmembrane segment spans residues 412–432; the sequence is LLMVRLAVLVAVTLTVPIVLF. The Cytoplasmic segment spans residues 433-453; it reads PIRTSVTTLLFPKRPFSWIRH. Residues 454–474 traverse the membrane as a helical segment; sequence FLIAAVLIALNNVLVILVPTI. Over 475–476 the chain is Extracellular; the sequence is KY. Residues 477–497 form a helical membrane-spanning segment; that stretch reads IFGFIGASSATMLIFILPAVF. Over 498–514 the chain is Cytoplasmic; the sequence is YLKLVKKESFRSPQKVG. The chain crosses the membrane as a helical span at residues 515-535; sequence ALIFLVVGIIFMIGSMALIII. Residues 536–547 lie on the Extracellular side of the membrane; the sequence is DWIYDPPNSKHH.

The protein belongs to the amino acid/polyamine transporter 2 family. The disulfide bond plays an important role in substrate transport, but has no effect on trafficking to the cell surface.

The protein localises to the cell membrane. Its subcellular location is the cell projection. It localises to the microvillus membrane. The enzyme catalyses L-methionine(in) + Na(+)(in) = L-methionine(out) + Na(+)(out). The catalysed reaction is L-asparagine(in) + Na(+)(in) = L-asparagine(out) + Na(+)(out). It catalyses the reaction L-threonine(in) + Na(+)(in) = L-threonine(out) + Na(+)(out). It carries out the reaction L-serine(in) + Na(+)(in) = L-serine(out) + Na(+)(out). The enzyme catalyses glycine(in) + Na(+)(in) = glycine(out) + Na(+)(out). The catalysed reaction is L-alanine(in) + Na(+)(in) = L-alanine(out) + Na(+)(out). It catalyses the reaction L-glutamine(in) + Na(+)(in) = L-glutamine(out) + Na(+)(out). It carries out the reaction L-histidine(in) + Na(+)(in) = L-histidine(out) + Na(+)(out). The enzyme catalyses L-cysteine(in) + Na(+)(in) = L-cysteine(out) + Na(+)(out). The catalysed reaction is L-proline(in) + Na(+)(in) = L-proline(out) + Na(+)(out). Its function is as follows. Symporter that cotransports neutral amino acids and sodium ions from the extraccellular to the intracellular side of the cell membrane. The transport is electrogenic, pH dependent and partially tolerates substitution of Na(+) by Li(+). Preferentially transports smaller amino acids, such as glycine, L-alanine, L-serine, L-asparagine and L-threonine, followed by L-cysteine, L-histidine, L-proline and L-glutamine and L-methionine. In Pongo abelii (Sumatran orangutan), this protein is Sodium-coupled neutral amino acid transporter 4.